Reading from the N-terminus, the 83-residue chain is Tetracenomycin polyketide synthase acyl carrier protein (83 aa).

A Carrier domain is found at 3-83; sequence QIGLPRLVEI…VNTETAGEVA (81 aa). Serine 41 is subject to O-(pantetheine 4'-phosphoryl)serine.

The tetracenomycin polyketide synthase (TCM PKS) is composed of a ketosynthase complex (TcmKL), an acyl carrier protein (TcmM), a cyclase (TcmN) and a probable second cyclase (TcmJ). Pantetheine 4'-phosphate is required as a cofactor. 4'-phosphopantetheine is transferred from CoA to a specific serine of apo-ACP.

The enzyme catalyses 10 malonyl-CoA + 8 H(+) = tetracenomycin F2 + 10 CO2 + 10 CoA + 2 H2O. It functions in the pathway antibiotic biosynthesis; tetracenomycin C biosynthesis. In terms of biological role, involved in the biosynthesis of tetracenomycin C (TCM C). Part of a type II polyketide synthase (PKS) that catalyzes the synthesis of tetracenomycin F2 (TCM F2), a precursor of TCM C, from malonyl-CoA. TcmM is an acyl carrier protein that serves as an acceptor of malonate from malonyl-CoA and acts as the tether for the substrates and intermediates of polyketide assembly. The malonyl CoA-acyl carrier protein transacylase FabD (MCT) is required to catalyze the transacylation between malonyl-CoA and TcmM, although a relatively slow spontaneous self-malonylation of TcmM also occurs in a reaction without the MCT. The chain is Tetracenomycin polyketide synthase acyl carrier protein from Streptomyces glaucescens.